Reading from the N-terminus, the 138-residue chain is Large ribosomal subunit protein bL19 (138 aa).

This sequence belongs to the bacterial ribosomal protein bL19 family.

This protein is located at the 30S-50S ribosomal subunit interface and may play a role in the structure and function of the aminoacyl-tRNA binding site. The sequence is that of Large ribosomal subunit protein bL19 from Rickettsia conorii (strain ATCC VR-613 / Malish 7).